The chain runs to 542 residues: Peptide chain release factor 3 (542 aa).

The tr-type G domain maps to 14–283; the sequence is ELRRNFAIIS…YFLEYALKPG (270 aa). GTP is bound by residues 23 to 30, 91 to 95, and 145 to 148; these read SHPDAGKT, DTPGH, and NKLD.

Belongs to the TRAFAC class translation factor GTPase superfamily. Classic translation factor GTPase family. PrfC subfamily.

The protein localises to the cytoplasm. Its function is as follows. Increases the formation of ribosomal termination complexes and stimulates activities of RF-1 and RF-2. It binds guanine nucleotides and has strong preference for UGA stop codons. It may interact directly with the ribosome. The stimulation of RF-1 and RF-2 is significantly reduced by GTP and GDP, but not by GMP. This chain is Peptide chain release factor 3, found in Nostoc punctiforme (strain ATCC 29133 / PCC 73102).